Here is a 581-residue protein sequence, read N- to C-terminus: Nicotinic acid-CoA ligase pyr1 (581 aa).

204–215 (MFLTSGTSGLPK) is an AMP binding site. The segment at 477–555 (EIEGILLKDP…DEIPRTGIGK (79 aa)) is AMP-binding.

The protein belongs to the ATP-dependent AMP-binding enzyme family.

The catalysed reaction is nicotinate + ATP + CoA = nicotinyl-CoA + AMP + diphosphate. The protein operates within secondary metabolite biosynthesis; terpenoid biosynthesis. Its function is as follows. Nicotinic acid-CoA ligase; part of the gene cluster that mediates the biosynthesis of pyripyropene A, a specific human acyl-coenzyme A:cholesterol acyltransferase 2 inhibitor. The first step of the pathway is the synthesis of nicotinyl-CoA from nicotinic acid by the nicotinic acid-CoA ligase pyr1. Nicotinyl-CoA is then a substrate of polyketide synthase pyr2 to produce 4-hydroxy-6-(3-pyridinyl)-2H-pyran-2-one (HPPO) which is further prenylated by the polyprenyl transferase pyr6 to yield farnesyl-HPPO. The next steps consist of an epoxidation of farnesyl-HPPO to epoxyfarnesyl-HPPO by FAD-dependent monooxygenase pyr5 and a cyclization of the terpenoid portion by the terpene cyclase pyr4 to yield deacetyl-pyripyropene E. The 2 cytochrome P450 monooxygenases pyr3 and pyr9, and the 2 acetyltransferases pyr7 and pyr8 are involved in the conversion of deacetyl-pyripyropene E into pyripyropene A through several cycles of oxidation and acetylation steps. Pyr7 acetylates deacetyl-pyripyropene E to pyripyropene E which is oxidized to 11-deacetyl-pyripyropene O by pyr3, which is in turn acetylated into pyripyropene O by pyr8. Pyripyropene O is then oxidized to deacetyl-pyripyropene A by pyr9. Deacetyl-pyripyropene A is finally acetylated to pyripyropene A by pyr8. This Aspergillus fumigatus (strain ATCC MYA-4609 / CBS 101355 / FGSC A1100 / Af293) (Neosartorya fumigata) protein is Nicotinic acid-CoA ligase pyr1.